Consider the following 305-residue polypeptide: Triplex capsid protein 2 (305 aa).

This sequence belongs to the herpesviridae TRX2 protein family. Interacts with TRX1 and major capisd protein/MCP.

Its subcellular location is the virion. It localises to the host nucleus. In terms of biological role, structural component of the T=16 icosahedral capsid. The capsid is composed of pentamers and hexamers of major capsid protein/MCP, which are linked together by heterotrimers called triplexes. These triplexes are formed by a single molecule of triplex protein 1/TRX1 and two copies of triplex protein 2/TRX2. Additionally, TRX1 is required for efficient transport of TRX2 to the nucleus, which is the site of capsid assembly. This chain is Triplex capsid protein 2, found in Homo sapiens (Human).